Here is a 239-residue protein sequence, read N- to C-terminus: Mitochondrial fission factor homolog B (239 aa).

Residues 1–219 (MAEINRMQYE…ENKERVKHEM (219 aa)) lie on the Cytoplasmic side of the membrane. The segment at 107 to 139 (EGPAPATPHSKEVRSSGHLKRDGLASENSLRQN) is disordered. Residues 115–130 (HSKEVRSSGHLKRDGL) show a composition bias toward basic and acidic residues. A coiled-coil region spans residues 184 to 214 (DLALADAASLRRQIIKLNRRLLLLEEENKER). A helical; Anchor for type IV membrane protein transmembrane segment spans residues 220–237 (TMYSIIIIFGLLNSWLWF). Residues 238–239 (RR) are Extracellular-facing.

It belongs to the Tango11 family.

It localises to the mitochondrion outer membrane. The protein resides in the peroxisome. Plays a role in mitochondrial and peroxisomal fission. Promotes the recruitment and association of the fission mediator dynamin-related protein 1 (DNM1L) to the mitochondrial surface. In Xenopus laevis (African clawed frog), this protein is Mitochondrial fission factor homolog B (mff-b).